A 32-amino-acid polypeptide reads, in one-letter code: Ranatuerin-2BYa (32 aa).

The cysteines at positions 27 and 32 are disulfide-linked.

Expressed by the skin glands.

Its subcellular location is the secreted. In terms of biological role, antibacterial activity against Gram-positive bacterium S.aureus and Gram-negative bacterium E.coli. Weak hemolytic activity. This is Ranatuerin-2BYa from Rana boylii (Foothill yellow-legged frog).